Reading from the N-terminus, the 517-residue chain is Crotonobetaine/carnitine--CoA ligase (517 aa).

Belongs to the ATP-dependent AMP-binding enzyme family.

It catalyses the reaction 4-(trimethylamino)butanoate + ATP + CoA = 4-(trimethylamino)butanoyl-CoA + AMP + diphosphate. It carries out the reaction crotonobetaine + ATP + CoA = crotonobetainyl-CoA + AMP + diphosphate. The enzyme catalyses (R)-carnitine + ATP + CoA = (R)-carnitinyl-CoA + AMP + diphosphate. It functions in the pathway amine and polyamine metabolism; carnitine metabolism. Catalyzes the transfer of CoA to carnitine, generating the initial carnitinyl-CoA needed for the CaiB reaction cycle. Also has activity toward crotonobetaine and gamma-butyrobetaine. In Salmonella paratyphi C (strain RKS4594), this protein is Crotonobetaine/carnitine--CoA ligase.